The following is a 305-amino-acid chain: Probable xyloglucan endotransglucosylase/hydrolase protein 21 (305 aa).

The N-terminal stretch at 1-25 (MVSSTLLVMSISLFLGLSILLVVHG) is a signal peptide. One can recognise a GH16 domain in the interval 26–216 (KDFNQDIDIT…WSQGPFVASF (191 aa)). Asn-46 carries an N-linked (GlcNAc...) asparagine glycan. Glu-102 serves as the catalytic Nucleophile. Glu-106 functions as the Proton donor in the catalytic mechanism. Glu-106 is a binding site for xyloglucan. Asn-110 carries N-linked (GlcNAc...) asparagine glycosylation. Residues 119-121 (HTN) and 129-131 (DRE) contribute to the xyloglucan site. Asn-146 carries N-linked (GlcNAc...) asparagine glycosylation. Residues 195–196 (DW) and Gly-200 each bind xyloglucan. 2 N-linked (GlcNAc...) asparagine glycosylation sites follow: Asn-206 and Asn-231. 2 cysteine pairs are disulfide-bonded: Cys-225–Cys-239 and Cys-282–Cys-296. Over residues 236 to 253 (TSPCSPGDSTSSSSSSTS) the composition is skewed to low complexity. Residues 236 to 258 (TSPCSPGDSTSSSSSSTSEWFSQ) form a disordered region. Arg-287 is a xyloglucan binding site.

The protein belongs to the glycosyl hydrolase 16 family. XTH group 2 subfamily. In terms of processing, contains at least one intrachain disulfide bond essential for its enzymatic activity. Predominantly expressed in green siliques.

It localises to the secreted. The protein localises to the cell wall. The protein resides in the extracellular space. Its subcellular location is the apoplast. The catalysed reaction is breaks a beta-(1-&gt;4) bond in the backbone of a xyloglucan and transfers the xyloglucanyl segment on to O-4 of the non-reducing terminal glucose residue of an acceptor, which can be a xyloglucan or an oligosaccharide of xyloglucan.. Catalyzes xyloglucan endohydrolysis (XEH) and/or endotransglycosylation (XET). Cleaves and religates xyloglucan polymers, an essential constituent of the primary cell wall, and thereby participates in cell wall construction of growing tissues. The protein is Probable xyloglucan endotransglucosylase/hydrolase protein 21 (XTH21) of Arabidopsis thaliana (Mouse-ear cress).